We begin with the raw amino-acid sequence, 413 residues long: NPL4-like protein 2 (413 aa).

Position 104 is a phosphoserine (S104). One can recognise an MPN domain in the interval S131–M272.

This sequence belongs to the NPL4 family.

The protein operates within protein degradation; proteasomal ubiquitin-dependent pathway. In terms of biological role, may be part of a complex that binds ubiquitinated proteins and that is necessary for the export of misfolded proteins from the ER to the cytoplasm, where they are degraded by the proteasome. The protein is NPL4-like protein 2 of Arabidopsis thaliana (Mouse-ear cress).